The primary structure comprises 296 residues: SHSP domain-containing protein CPUR_05420 (296 aa).

The segment at 50-83 (AWQTCPQQRHPHQPDVSGPPGSGFGEQPSQDTPN) is disordered. Positions 169-296 (ETKKSFTPDI…GKGVKEITIV (128 aa)) constitute a sHSP domain.

Belongs to the small heat shock protein (HSP20) family.

Functionally, monooxygenase; part of the ergochrome gene cluster responsible for the typical purple-black color of the ergot sclerotia. The ergochrome gene cluster produces several ergot pigments including the yellow ergochrome secalonic acid and its derivatives, as well as the red anthraquinones endocrocin and clavorubin. The pathway begins with the synthesis of atrochrysone thioester by the polyketide synthase (PKS) CPUR_05437. The atrochrysone carboxyl ACP thioesterase CPUR_05436 then breaks the thioester bond and releases the atrochrysone carboxylic acid from CPUR_05437. The atrochrysone carboxylic acid is then converted to atrochrysone which is further transformed into emodin anthrone. The next step is performed by the anthrone oxygenase CPUR_05434 that catalyzes the oxidation of emodinanthrone to emodin. Emodin is further modified to yield monodictyphenone via several steps involving CPUR_05427, CPUR_05428, CPUR_05429 and CPUR_05430. The short chain dehydrogenase/reductase CPUR_05418 then catalyzes the C-5 ketoreduction to give the xanthone skeleton of the monomeric units. Ergochromes formation requires further dimerization steps of different xanthone units, probably catalyzed by the cytochrome P450 monooxygenase CPUR_05419. CPUR_05425, CPUR_05426 and CPUR_05431 are unique to Claviceps, thus it is likely that they are involved in further modification of xanthone units or in their dimerization. The yellow ergochromes and the red anthraquinone pigments endocrocin and clavorubin are products from the same PKS derived precursors and the latter are likely shunt products in the pathway of xanthone biosynthesis. It is proposed that atrochrysone carboxylic acid released from the PKS CPUR_05437 can also be converted to endocrocin anthrone which is further oxidized into endocrocin by CPUR_05435. Endocrocin could be then modified to clavorubin, possibly by CPUR_05423 and CPUR_05431. Clavorubin is the principal anthraquinone metabolite produced by the cluster with a much higher yield compared to endocrocin. The sequence is that of SHSP domain-containing protein CPUR_05420 from Claviceps purpurea (strain 20.1) (Ergot fungus).